A 186-amino-acid polypeptide reads, in one-letter code: MSSNNLVAKIAQPYASALLDLANEKKAIEQISQDMKLIKDILLQSGKLKYFLANPLKTIEAKKQVIAATFGDQISENTLSFLMVLVDRKRISMLDVIAGKYLELAYAMESLTIANISTSIALNSDQENLLIDKIKAMTSAKEVKLVISVDPELIGGFTIQIGSKVIDTSIRGQLKQMASHLDVAAM.

It belongs to the ATPase delta chain family. In terms of assembly, F-type ATPases have 2 components, F(1) - the catalytic core - and F(0) - the membrane proton channel. F(1) has five subunits: alpha(3), beta(3), gamma(1), delta(1), epsilon(1). CF(0) has four main subunits: a(1), b(1), b'(1) and c(10-14). The alpha and beta chains form an alternating ring which encloses part of the gamma chain. F(1) is attached to F(0) by a central stalk formed by the gamma and epsilon chains, while a peripheral stalk is formed by the delta, b and b' chains.

It localises to the plastid. The protein resides in the chloroplast thylakoid membrane. F(1)F(0) ATP synthase produces ATP from ADP in the presence of a proton or sodium gradient. F-type ATPases consist of two structural domains, F(1) containing the extramembraneous catalytic core and F(0) containing the membrane proton channel, linked together by a central stalk and a peripheral stalk. During catalysis, ATP synthesis in the catalytic domain of F(1) is coupled via a rotary mechanism of the central stalk subunits to proton translocation. In terms of biological role, this protein is part of the stalk that links CF(0) to CF(1). It either transmits conformational changes from CF(0) to CF(1) or is implicated in proton conduction. This is ATP synthase subunit delta, chloroplastic from Porphyra purpurea (Red seaweed).